Here is a 179-residue protein sequence, read N- to C-terminus: Acireductone dioxygenase (179 aa).

Positions 1 to 21 (MVQAWYMDDSTEDQRKPHHLQ) are disordered. 4 residues coordinate Fe(2+): histidine 88, histidine 90, glutamate 94, and histidine 133. Histidine 88, histidine 90, glutamate 94, and histidine 133 together coordinate Ni(2+).

Belongs to the acireductone dioxygenase (ARD) family. Monomer. Interacts with MMP14. Fe(2+) is required as a cofactor. Ni(2+) serves as cofactor.

The protein localises to the cytoplasm. It localises to the nucleus. It is found in the cell membrane. It carries out the reaction 1,2-dihydroxy-5-(methylsulfanyl)pent-1-en-3-one + O2 = 4-methylsulfanyl-2-oxobutanoate + formate + 2 H(+). The catalysed reaction is 1,2-dihydroxy-5-(methylsulfanyl)pent-1-en-3-one + O2 = 3-(methylsulfanyl)propanoate + CO + formate + 2 H(+). It participates in amino-acid biosynthesis; L-methionine biosynthesis via salvage pathway; L-methionine from S-methyl-5-thio-alpha-D-ribose 1-phosphate: step 5/6. Catalyzes 2 different reactions between oxygen and the acireductone 1,2-dihydroxy-3-keto-5-methylthiopentene (DHK-MTPene) depending upon the metal bound in the active site. Fe-containing acireductone dioxygenase (Fe-ARD) produces formate and 2-keto-4-methylthiobutyrate (KMTB), the alpha-ketoacid precursor of methionine in the methionine recycle pathway. Ni-containing acireductone dioxygenase (Ni-ARD) produces methylthiopropionate, carbon monoxide and formate, and does not lie on the methionine recycle pathway. The protein is Acireductone dioxygenase (adi1) of Xenopus tropicalis (Western clawed frog).